Reading from the N-terminus, the 158-residue chain is NAD(P)H-quinone oxidoreductase subunit J, chloroplastic (158 aa).

It belongs to the complex I 30 kDa subunit family. In terms of assembly, NDH is composed of at least 16 different subunits, 5 of which are encoded in the nucleus.

Its subcellular location is the plastid. It localises to the chloroplast thylakoid membrane. It carries out the reaction a plastoquinone + NADH + (n+1) H(+)(in) = a plastoquinol + NAD(+) + n H(+)(out). The catalysed reaction is a plastoquinone + NADPH + (n+1) H(+)(in) = a plastoquinol + NADP(+) + n H(+)(out). Its function is as follows. NDH shuttles electrons from NAD(P)H:plastoquinone, via FMN and iron-sulfur (Fe-S) centers, to quinones in the photosynthetic chain and possibly in a chloroplast respiratory chain. The immediate electron acceptor for the enzyme in this species is believed to be plastoquinone. Couples the redox reaction to proton translocation, and thus conserves the redox energy in a proton gradient. The sequence is that of NAD(P)H-quinone oxidoreductase subunit J, chloroplastic from Vitis vinifera (Grape).